The chain runs to 616 residues: MPKYRSITTTHGRNMTGARALWRATGMTTEDFDKMIIAVVNSFTQFVPGHIHLRNVGALVSEQINITGGVAKEFNTIAIDDGIAMGHSGMLYSLPSRDLIADSVEYMINAHCVDAMVCISNCDKITPGMLMAALRLNIPAIFVSGGPMESGAITLSNQNVKLNLIDAITCSVDPNISDVDQQRIESAACPTCGSCSGMFTANSMNCLTEALGLAQPGNGSLLATHSDRKKLFLNAGKYIVHLAKSYYEENNYSVLPRNIANKSSFENAMMLDIAMGGSTNTVLHLLAAAQEGEIDFTMADIDKLSRKVPHLCKVAPNTQRYHMEDFHRAGGVMGVLGELHRCGLLHEDTRNILNKSLLETLLNYDIFSCDNFESKNMYAAAPAGIRSTQAFIQKNRWTSLDTDRRSGCIRSREHAYSQDGGLAVLYGNLAVDGCLVKTAGVHINLQKFSGPAKVYESQEESVQAILTGNIHSGDVIVIRYEGPKGGPGMQEMLYPTSFLKSMGLDLCCALITDGRFSGGTSGLSIGHISPEAANKGLIGLVHDGDIINIDISMRSITLEVSEHILKIRHAAEIARGNKAWTPTNRNRNISISLKAYAHLVTSADKGAVRDKSKLLG.

D81 contributes to the Mg(2+) binding site. C122 lines the [2Fe-2S] cluster pocket. D123 and K124 together coordinate Mg(2+). An N6-carboxylysine modification is found at K124. Position 195 (C195) interacts with [2Fe-2S] cluster. E491 serves as a coordination point for Mg(2+). The active-site Proton acceptor is S517.

It belongs to the IlvD/Edd family. In terms of assembly, homodimer. [2Fe-2S] cluster serves as cofactor. Mg(2+) is required as a cofactor.

It catalyses the reaction (2R)-2,3-dihydroxy-3-methylbutanoate = 3-methyl-2-oxobutanoate + H2O. The catalysed reaction is (2R,3R)-2,3-dihydroxy-3-methylpentanoate = (S)-3-methyl-2-oxopentanoate + H2O. Its pathway is amino-acid biosynthesis; L-isoleucine biosynthesis; L-isoleucine from 2-oxobutanoate: step 3/4. It functions in the pathway amino-acid biosynthesis; L-valine biosynthesis; L-valine from pyruvate: step 3/4. Functions in the biosynthesis of branched-chain amino acids. Catalyzes the dehydration of (2R,3R)-2,3-dihydroxy-3-methylpentanoate (2,3-dihydroxy-3-methylvalerate) into 2-oxo-3-methylpentanoate (2-oxo-3-methylvalerate) and of (2R)-2,3-dihydroxy-3-methylbutanoate (2,3-dihydroxyisovalerate) into 2-oxo-3-methylbutanoate (2-oxoisovalerate), the penultimate precursor to L-isoleucine and L-valine, respectively. The protein is Dihydroxy-acid dehydratase of Blochmanniella pennsylvanica (strain BPEN).